The chain runs to 642 residues: Threonine--tRNA ligase (642 aa).

The 61-residue stretch at 1–61 folds into the TGS domain; it reads MPVITLPDGS…DTDAQLAIIT (61 aa). A catalytic region spans residues 243–534; it reads DHRKIGKQLD…LTEEFAGFFP (292 aa). 3 residues coordinate Zn(2+): C334, H385, and H511.

The protein belongs to the class-II aminoacyl-tRNA synthetase family. Homodimer. Zn(2+) is required as a cofactor.

It is found in the cytoplasm. It catalyses the reaction tRNA(Thr) + L-threonine + ATP = L-threonyl-tRNA(Thr) + AMP + diphosphate + H(+). Its function is as follows. Catalyzes the attachment of threonine to tRNA(Thr) in a two-step reaction: L-threonine is first activated by ATP to form Thr-AMP and then transferred to the acceptor end of tRNA(Thr). Also edits incorrectly charged L-seryl-tRNA(Thr). The polypeptide is Threonine--tRNA ligase (Pectobacterium carotovorum subsp. carotovorum (strain PC1)).